The chain runs to 337 residues: MEKLSINNNNNNRRYQSRRFDGITIIRIVVLVFIVTVSTYFVNSYTCNQPHHNHSTRPSHYLPINGTHGLMNNDDSLHNKGAIGHYNTTVSLERRADENNSTTNGLFPSTSSSTFIFTPSSSSSSTFQQSRSSPQTTSTSSFVATTSSFQQETSQTSIPDTTTDFSFSSFSEAPTTSTTSSTSEFSSTPQETSNTVTSTSSTSTSSSSSPTSSPATTSASQHVTTFSSVDNGKTIVVTRTSVISSSPTASNSNNNKNNDNGGGLSHTNRIVVGVVVGVGGSILIGLLAVLFYLRKRNNRDYEGGWTFWRKNEKLGSDEFFNGELGVRDRNINQGSNF.

At 1-21 (MEKLSINNNNNNRRYQSRRFD) the chain is on the cytoplasmic side. The helical transmembrane segment at 22–42 (GITIIRIVVLVFIVTVSTYFV) threads the bilayer. Residues 43 to 269 (NSYTCNQPHH…NGGGLSHTNR (227 aa)) lie on the Extracellular side of the membrane. N-linked (GlcNAc...) asparagine glycans are attached at residues Asn53, Asn65, Asn87, and Asn100. 2 stretches are compositionally biased toward low complexity: residues 124–220 (SSTF…TSAS) and 241–259 (SVISSSPTASNSNNNKNND). Disordered regions lie at residues 124–224 (SSTF…QHVT) and 241–265 (SVISSSPTASNSNNNKNNDNGGGLS). A helical membrane pass occupies residues 270–290 (IVVGVVVGVGGSILIGLLAVL). Residues 273–277 (GVVVG) carry the Glycophorin A motif. At 291 to 337 (FYLRKRNNRDYEGGWTFWRKNEKLGSDEFFNGELGVRDRNINQGSNF) the chain is on the cytoplasmic side. The Calmodulin-binding motif lies at 301–314 (YEGGWTFWRKNEKL).

It belongs to the MID2 like cell wall stress sensor family. Cross-linked to the carbohydrate polymers of the cell wall. In terms of processing, O-glycosylated by MNT1 and MNT2. Also N-glycosylated.

The protein resides in the cell membrane. Its subcellular location is the cell septum. It is found in the secreted. The protein localises to the cell wall. In terms of biological role, cell-surface associated glycoprotein that acts as a plasma membrane receptor-type protein which senses the presence of matrix. Binds to calmodulin in response to environmental conditions and initiates a signaling cascade that activates CEK1, thus promoting invasive filamentation. Involved in the maintenance of the cell wall. This is Cell-surface associated glycoprotein DFI1 from Candida albicans (strain SC5314 / ATCC MYA-2876) (Yeast).